A 226-amino-acid polypeptide reads, in one-letter code: Protein TRI1 (226 aa).

Residues 1–56 form the DEK-C domain; that stretch reads MADINKYIPMVDAILSVSNPDEISPKRVRKALQILYSVNLDSQRKLINELILERFG. Residues 83–118 form a disordered region; the sequence is QKEEERPLRSTRKRKGKSESKSKRKKKKNDSPDSNS. The segment covering 91 to 110 has biased composition (basic residues); the sequence is RSTRKRKGKSESKSKRKKKK. Position 113 is a phosphoserine (serine 113). An SWIB/MDM2 domain is found at 119-195; the sequence is ISVRKVLLSA…NKLLTKHLFN (77 aa). A compositionally biased stretch (basic and acidic residues) spans 200–218; sequence VKHEEEQKQTPEKEIKLEN. Positions 200–226 are disordered; it reads VKHEEEQKQTPEKEIKLENESLPNLSG. Glycyl lysine isopeptide (Lys-Gly) (interchain with G-Cter in SUMO) cross-links involve residues lysine 201 and lysine 215. Phosphoserine is present on serine 225.

The protein resides in the cytoplasm. Its subcellular location is the nucleus. It is found in the nucleolus. Functionally, may be involved in transcription regulation. In Saccharomyces cerevisiae (strain ATCC 204508 / S288c) (Baker's yeast), this protein is Protein TRI1 (TRI1).